A 155-amino-acid chain; its full sequence is Small ribosomal subunit protein uS7 (155 aa).

Belongs to the universal ribosomal protein uS7 family. As to quaternary structure, part of the 30S ribosomal subunit. Contacts proteins S9 and S11.

Functionally, one of the primary rRNA binding proteins, it binds directly to 16S rRNA where it nucleates assembly of the head domain of the 30S subunit. Is located at the subunit interface close to the decoding center, probably blocks exit of the E-site tRNA. The polypeptide is Small ribosomal subunit protein uS7 (Xylella fastidiosa (strain 9a5c)).